Here is a 401-residue protein sequence, read N- to C-terminus: Imidazolonepropionase (401 aa).

Fe(3+)-binding residues include H66 and H68. Positions 66 and 68 each coordinate Zn(2+). 4-imidazolone-5-propanoate is bound by residues R75, Y138, and H171. Y138 provides a ligand contact to N-formimidoyl-L-glutamate. Residue H236 coordinates Fe(3+). H236 serves as a coordination point for Zn(2+). Q239 provides a ligand contact to 4-imidazolone-5-propanoate. D311 is a Fe(3+) binding site. D311 is a binding site for Zn(2+). Residues N313 and G315 each coordinate N-formimidoyl-L-glutamate. T316 contributes to the 4-imidazolone-5-propanoate binding site.

Belongs to the metallo-dependent hydrolases superfamily. HutI family. It depends on Zn(2+) as a cofactor. Requires Fe(3+) as cofactor.

It localises to the cytoplasm. It carries out the reaction 4-imidazolone-5-propanoate + H2O = N-formimidoyl-L-glutamate. Its pathway is amino-acid degradation; L-histidine degradation into L-glutamate; N-formimidoyl-L-glutamate from L-histidine: step 3/3. Functionally, catalyzes the hydrolytic cleavage of the carbon-nitrogen bond in imidazolone-5-propanoate to yield N-formimidoyl-L-glutamate. It is the third step in the universal histidine degradation pathway. The polypeptide is Imidazolonepropionase (Pseudomonas putida (Arthrobacter siderocapsulatus)).